Here is a 453-residue protein sequence, read N- to C-terminus: Potassium/proton antiporter CemA (453 aa).

The next 4 helical transmembrane spans lie at 235-255 (YMAC…IIFL), 328-348 (ICTI…ACLL), 378-398 (ILLL…EIII), and 414-434 (VSCF…YWIF).

Belongs to the CemA family.

It localises to the plastid. The protein localises to the chloroplast inner membrane. The catalysed reaction is K(+)(in) + H(+)(out) = K(+)(out) + H(+)(in). In terms of biological role, contributes to K(+)/H(+) antiport activity by supporting proton efflux to control proton extrusion and homeostasis in chloroplasts in a light-dependent manner to modulate photosynthesis. Prevents excessive induction of non-photochemical quenching (NPQ) under continuous-light conditions. Indirectly promotes efficient inorganic carbon uptake into chloroplasts. The sequence is that of Potassium/proton antiporter CemA from Zygnema circumcarinatum (Green alga).